The following is an 825-amino-acid chain: Probable inorganic carbon transporter subunit DabA (825 aa).

Residues C346, D348, H516, and C531 each contribute to the Zn(2+) site.

This sequence belongs to the inorganic carbon transporter (TC 9.A.2) DabA family. As to quaternary structure, forms a complex with DabB. Requires Zn(2+) as cofactor.

It localises to the cell inner membrane. Functionally, part of an energy-coupled inorganic carbon pump. The chain is Probable inorganic carbon transporter subunit DabA from Paracidovorax citrulli (strain AAC00-1) (Acidovorax citrulli).